Consider the following 655-residue polypeptide: p-hydroxybenzoic acid efflux pump subunit AaeB (655 aa).

A run of 11 helical transmembrane segments spans residues 13-33 (FAVKLATAIVLALFVGFHFQL), 38-58 (WAVLTAAIVAAGPAFAAGGEP), 67-89 (GFLRIIGTFIGCIAGLVIIIAMI), 93-112 (LLMILVCCIWAGFCTWISSL), 121-141 (WGLAGYTALIIVITIQPEPLL), 152-172 (EIVIGIVCAIMADLLFSPRSI), 370-390 (LFWLWTGWTSGSGAMVMIAVV), 407-427 (FIYGTLAALPLGLLYFLVIIP), 431-451 (QSMLLLCISLAVLGFFLGIEV), 459-479 (MGALASTINIIVLDNPMTFHF), and 482-502 (FLDSALGQIVGCVLAFTVILL).

The protein belongs to the aromatic acid exporter ArAE (TC 2.A.85) family.

It is found in the cell inner membrane. Its function is as follows. Forms an efflux pump with AaeA. Could function as a metabolic relief valve, allowing to eliminate certain compounds when they accumulate to high levels in the cell. This chain is p-hydroxybenzoic acid efflux pump subunit AaeB, found in Escherichia coli O9:H4 (strain HS).